The chain runs to 241 residues: DnaJ homolog subfamily B member 6 (241 aa).

The interaction with HSP70 stretch occupies residues 2 to 146 (VDYYEVLGVQ…TGSFFSAFSG (145 aa)). The J domain maps to 3–69 (DYYEVLGVQR…KKRDIYDKYG (67 aa)). The interaction with KRT18 stretch occupies residues 119-241 (FEDFFGNRRG…KEQLLRLDNK (123 aa)). Omega-N-methylarginine is present on Arg-135.

As to quaternary structure, homooligomer. Interacts with BAG3, HSPB8 and STUB1. Interacts with ALKBH1. Interacts with HSP70, KRT18 and PTTG.

The protein resides in the cytoplasm. It localises to the perinuclear region. It is found in the nucleus. Its subcellular location is the myofibril. The protein localises to the sarcomere. The protein resides in the z line. In terms of biological role, has a stimulatory effect on the ATPase activity of HSP70 in a dose-dependent and time-dependent manner and hence acts as a co-chaperone of HSP70. Plays an indispensable role in the organization of KRT8/KRT18 filaments. Acts as an endogenous molecular chaperone for neuronal proteins including huntingtin. Suppresses aggregation and toxicity of polyglutamine-containing, aggregation-prone proteins. Also reduces cellular toxicity and caspase-3 activity. The sequence is that of DnaJ homolog subfamily B member 6 from Macaca fascicularis (Crab-eating macaque).